We begin with the raw amino-acid sequence, 355 residues long: Probable zinc transporter 12 (355 aa).

The signal sequence occupies residues 1–25 (MSRFRKTLVSAFVLCLVIFPLLVSA). Residues 26–50 (AEEENQCGGSKGGSAAEKASALKYK) lie on the Extracellular side of the membrane. A helical membrane pass occupies residues 51–71 (IIAFFSILIAGVFGVCLPIFG). The Cytoplasmic segment spans residues 72 to 77 (LKTESN). A helical membrane pass occupies residues 78–98 (FFMYVKAFAAGVILATGFVHI). Topologically, residues 99–116 (LPDATESLTSSCLGEEPP) are extracellular. Residues 117–137 (WGDFPMTGLVAMAASILTMLI) form a helical membrane-spanning segment. At 138–200 (ESFASGYLNR…DDDHIDMRKK (63 aa)) the chain is on the cytoplasmic side. Positions 156–183 (TLPVSTGGEEEHAHTGSAHTHASQGHSH) are disordered. Residues 201–221 (IVTQILELGIVVHSVIIGISL) traverse the membrane as a helical segment. Residues 222 to 231 (GASPSVSTIK) lie on the Extracellular side of the membrane. Residues 232 to 252 (PLIAAITFHQLFEGFGLGGCI) traverse the membrane as a helical segment. The Cytoplasmic segment spans residues 253 to 261 (SEAKFRVKK). Residues 262-282 (IWVMLMFFALTAPIGIGIGIG) traverse the membrane as a helical segment. At 283–302 (VAEIYNENSPMALKVSGFLN) the chain is on the extracellular side. A helical transmembrane segment spans residues 303–323 (ATASGILIYMALVDLVAPLFM). Over 324–334 (NQKTQSSMKIQ) the chain is Cytoplasmic. Residues 335-355 (VACSVSLVVGAGLMSLLAIWA) form a helical membrane-spanning segment.

Belongs to the ZIP transporter (TC 2.A.5) family.

It is found in the cell membrane. In terms of biological role, zinc transporter involved in zinc uptake in roots. Targeted by BZIP23 transcription factor in response to zinc-deficient conditions. In Arabidopsis thaliana (Mouse-ear cress), this protein is Probable zinc transporter 12 (ZIP12).